A 645-amino-acid polypeptide reads, in one-letter code: MSVINCEEVKRDEFHTEKYYESYNIFGAHVVTEDEIQGVRFTVWAPHAKAMSVVGDFNEWDYEQHKMLQVTEEGIWSLFIPHIEEGEIYKYAIETLAGDVILKADPYAIYAEVRPNTASVVFDIKGYEWNDKNWTRKKKKKPIYKEAMTVYELHFGSWKKKEDGTLYSYREMVEELIPYVVEHQFTHIEIMPLVEHPYDRSWGYQGTGYYAATSRFGTPHDLMYFVDECHKYGIGVILDWVPGHFCKDAHGLYLFDGTPTYEYKDKDVQENPVWGTVNFDLGKREVRNFLISNALFWMRYFHIDGFRVDAVANMLYWNKEGQEQSNEHAVSFLRELNEAVFAEDEDFLMTAEDSTAWPLVTTPTYEGGLGFNYKWNMGWMNDVLKYMECAPEYRKHIHEKMTFSLLYAYSENFILPLSHDEVVHGKKSLLNKMPGDYWDKFAQLRLLYGYFFTHPGKKLLFMGGEFGQFDEWKDLEDLDWNLHDFEMHRYMHDYFKELIALYKRSKPLWQLDHSPEGFQWIDANNNEQSIFSFIRQGDKQEDALVVVCNFTKATYENYKVGVPDFEYYNEILNSDAEQYGGSGQVNKKRLKTILEPYHNQAAHVEITIPPFGVSILRPVKTRKGSKKQDGSKTKVRSNVTSRGKR.

Catalysis depends on Asp-309, which acts as the Nucleophile. Glu-352 serves as the catalytic Proton donor. The disordered stretch occupies residues 619-645; that stretch reads VKTRKGSKKQDGSKTKVRSNVTSRGKR. A compositionally biased stretch (polar residues) spans 636 to 645; the sequence is RSNVTSRGKR.

The protein belongs to the glycosyl hydrolase 13 family. GlgB subfamily. Monomer.

It catalyses the reaction Transfers a segment of a (1-&gt;4)-alpha-D-glucan chain to a primary hydroxy group in a similar glucan chain.. It participates in glycan biosynthesis; glycogen biosynthesis. In terms of biological role, catalyzes the formation of the alpha-1,6-glucosidic linkages in glycogen by scission of a 1,4-alpha-linked oligosaccharide from growing alpha-1,4-glucan chains and the subsequent attachment of the oligosaccharide to the alpha-1,6 position. The polypeptide is 1,4-alpha-glucan branching enzyme GlgB (Bacillus cereus (strain G9842)).